Reading from the N-terminus, the 78-residue chain is ATP synthase subunit c (78 aa).

The next 2 helical transmembrane spans lie at 16–36 (LATL…ASFL) and 57–77 (MALA…ILFV).

It belongs to the ATPase C chain family. In terms of assembly, F-type ATPases have 2 components, F(1) - the catalytic core - and F(0) - the membrane proton channel. F(1) has five subunits: alpha(3), beta(3), gamma(1), delta(1), epsilon(1). F(0) has three main subunits: a(1), b(2) and c(10-14). The alpha and beta chains form an alternating ring which encloses part of the gamma chain. F(1) is attached to F(0) by a central stalk formed by the gamma and epsilon chains, while a peripheral stalk is formed by the delta and b chains.

It localises to the cell inner membrane. F(1)F(0) ATP synthase produces ATP from ADP in the presence of a proton or sodium gradient. F-type ATPases consist of two structural domains, F(1) containing the extramembraneous catalytic core and F(0) containing the membrane proton channel, linked together by a central stalk and a peripheral stalk. During catalysis, ATP synthesis in the catalytic domain of F(1) is coupled via a rotary mechanism of the central stalk subunits to proton translocation. Its function is as follows. Key component of the F(0) channel; it plays a direct role in translocation across the membrane. A homomeric c-ring of between 10-14 subunits forms the central stalk rotor element with the F(1) delta and epsilon subunits. The polypeptide is ATP synthase subunit c (Hyphomonas neptunium (strain ATCC 15444)).